The following is a 330-amino-acid chain: MEARCDFCGTEKALIYCKSDSAKLCLNCDVNVHSANPLSQRHTRSLLCEKCSLQPTAVHCMNENVSLCQGCQWTASNCTGLGHRLQSLNPYSDCPSPSDFGKIWSSTLEPSVTSLVSPFSDTLLQELDDWNGSSTSVVTQTQNLKDYSSFFPMESNLPKVIEEECSGLDLCEGINLDDAPLNFNASNDIIGCSSLDNTKCYEYEDSFKEENNIGLPSLLLPTLSGNVVPNMSLSMSNLTGESNATDYQDCGISPGFLIGDSPWESNVEVSFNPKLRDEAKKRYKQKKSKRMFGKQIRYASRKARADTRKRVKGRFVKSGETFEYDPSLVM.

Positions 5, 8, 28, and 33 each coordinate Zn(2+). Residues 5-47 form a B box-type 1; atypical zinc finger; it reads CDFCGTEKALIYCKSDSAKLCLNCDVNVHSANPLSQRHTRSLL. The segment at 48–88 adopts a B box-type 2; degenerate zinc-finger fold; sequence CEKCSLQPTAVHCMNENVSLCQGCQWTASNCTGLGHRLQSL. In terms of domain architecture, CCT spans 276–318; the sequence is RDEAKKRYKQKKSKRMFGKQIRYASRKARADTRKRVKGRFVKS.

It belongs to the CONSTANS family.

Its subcellular location is the nucleus. The sequence is that of Putative zinc finger protein CONSTANS-LIKE 11 (COL11) from Arabidopsis thaliana (Mouse-ear cress).